Reading from the N-terminus, the 409-residue chain is Mitochondrial import inner membrane translocase subunit TIM50-B (409 aa).

The transit peptide at Met1–Gly42 directs the protein to the mitochondrion. The Mitochondrial matrix segment spans residues Gly43 to Lys127. The segment at Pro93–Glu114 is disordered. The span at Glu102 to Glu111 shows a compositional bias: basic and acidic residues. The chain crosses the membrane as a helical span at residues Leu128–Tyr148. Over Gly149–His409 the chain is Mitochondrial intermembrane. The FCP1 homology domain maps to Tyr205 to Leu348.

This sequence belongs to the TIM50 family. As to quaternary structure, component of the TIM23 complex at least composed of Tim23, Tim17 (Tim17a1, Tim17a2 or Tim17b1) and a Tim50. Exclusively expressed in the testis.

It is found in the mitochondrion inner membrane. In terms of biological role, essential component of the TIM23 complex, a complex that mediates the translocation of transit peptide-containing proteins across the mitochondrial inner membrane. This chain is Mitochondrial import inner membrane translocase subunit TIM50-B (ttm2), found in Drosophila melanogaster (Fruit fly).